The sequence spans 631 residues: MARAVGIDLGTTNSCIATLEGGEPTVIVNAEGARTTPSVVAFSKSGEILVGEVAKRQAVTNVDRTISSVKRHMGTDWTVDIDGKKWTPQEISAQILMKLKRDAEAYLGEPVTDAVITCPAYFNDAQRQATKDAGKIAGLNVLRIINEPTAAALAYGLEKGKEDERILVFDLGGGTFDVSLLEIGKDDDGFSTIQVQATNGDNHLGGDDWDQKIIDWLVSEVKNKYGVDLSKDKIALQRLKEAAEQAKKELSSSTSTSISMQYLAMTPDGTPVHLDETLTRAHFEEMTSDLLGRCRTPFNNVLHDAGISVSDIDHVVLVGGSTRMPAVKDLVKELTGGKEANQSVNPDEVVAVGAAVQSGVIKGDRKDVLLIDVTPLSLGIETKGGIMTKLIDRNTAIPTKRSEVFSTAEDNQPSVLIQVYQGEREFARDNKPLGTFELTGIAPAPRGVPQIEVTFDIDANGIVHVSAKDKGTGKEQSMTITGGSGLPKDEIDRMVKEAEAHEAEDKQRKEDAETRNQAEAFAYSTEKLVNDNKDKLSDDIVKEVTDKVNALKEALKGDDTEKVKTAQTELMTAAQKIGQVLYAQQGAEGAAAGAGAAGAAGAGASAGSASGSDDDTVEAEVVDDDDDKDNK.

A Phosphothreonine; by autocatalysis modification is found at Thr175. The segment at 586-631 (GAEGAAAGAGAAGAAGAGASAGSASGSDDDTVEAEVVDDDDDKDNK) is disordered. Residues 602–611 (AGASAGSASG) show a composition bias toward low complexity. The span at 612–631 (SDDDTVEAEVVDDDDDKDNK) shows a compositional bias: acidic residues.

Belongs to the heat shock protein 70 family.

In terms of biological role, acts as a chaperone. The sequence is that of Chaperone protein DnaK from Bifidobacterium longum subsp. infantis (strain ATCC 15697 / DSM 20088 / JCM 1222 / NCTC 11817 / S12).